The following is a 241-amino-acid chain: Ribose-5-phosphate isomerase A (241 aa).

Residues 28–31 (TGST), 83–86 (DGAD), and 96–99 (KGGG) each bind substrate. Catalysis depends on glutamate 105, which acts as the Proton acceptor. Lysine 123 is a binding site for substrate.

This sequence belongs to the ribose 5-phosphate isomerase family. Homodimer.

The catalysed reaction is aldehydo-D-ribose 5-phosphate = D-ribulose 5-phosphate. It participates in carbohydrate degradation; pentose phosphate pathway; D-ribose 5-phosphate from D-ribulose 5-phosphate (non-oxidative stage): step 1/1. Its function is as follows. Catalyzes the reversible conversion of ribose-5-phosphate to ribulose 5-phosphate. This is Ribose-5-phosphate isomerase A from Rhodopseudomonas palustris (strain BisA53).